A 340-amino-acid chain; its full sequence is tRNA N6-adenosine threonylcarbamoyltransferase (340 aa).

Residues His-111 and His-115 each contribute to the Fe cation site. Substrate contacts are provided by residues 134 to 138 (LVSGG), Asp-167, Gly-180, and Asn-276. Residue Asp-304 coordinates Fe cation.

This sequence belongs to the KAE1 / TsaD family. Requires Fe(2+) as cofactor.

Its subcellular location is the cytoplasm. The catalysed reaction is L-threonylcarbamoyladenylate + adenosine(37) in tRNA = N(6)-L-threonylcarbamoyladenosine(37) in tRNA + AMP + H(+). Its function is as follows. Required for the formation of a threonylcarbamoyl group on adenosine at position 37 (t(6)A37) in tRNAs that read codons beginning with adenine. Is involved in the transfer of the threonylcarbamoyl moiety of threonylcarbamoyl-AMP (TC-AMP) to the N6 group of A37, together with TsaE and TsaB. TsaD likely plays a direct catalytic role in this reaction. This is tRNA N6-adenosine threonylcarbamoyltransferase from Helicobacter pylori (strain J99 / ATCC 700824) (Campylobacter pylori J99).